We begin with the raw amino-acid sequence, 407 residues long: Tyrosine--tRNA ligase (407 aa).

Tyr-35 is an L-tyrosine binding site. Residues 40-49 carry the 'HIGH' region motif; that stretch reads PTADSLHVGH. The L-tyrosine site is built by Tyr-168 and Gln-172. Positions 228–232 match the 'KMSKS' region motif; the sequence is KMGKT. Lys-231 contacts ATP. The region spanning 341–405 is the S4 RNA-binding domain; sequence NLLVDLLVKC…RGKKNFNRIV (65 aa).

Belongs to the class-I aminoacyl-tRNA synthetase family. TyrS type 1 subfamily. In terms of assembly, homodimer.

It localises to the cytoplasm. The enzyme catalyses tRNA(Tyr) + L-tyrosine + ATP = L-tyrosyl-tRNA(Tyr) + AMP + diphosphate + H(+). Its function is as follows. Catalyzes the attachment of tyrosine to tRNA(Tyr) in a two-step reaction: tyrosine is first activated by ATP to form Tyr-AMP and then transferred to the acceptor end of tRNA(Tyr). The chain is Tyrosine--tRNA ligase from Clostridium botulinum (strain ATCC 19397 / Type A).